The chain runs to 176 residues: MDLPGPIHEILMLFGGFVLLLGGLGVVLLTNPIYSAFSLGLVLVCISLFYFLLNSYFVAVAQLLIYVGAINVLIIFAVMFVNGSEWSKDKNYWTIGDGFTSIVCITIVFSLMTTIPDTSWYGILWTTRSNQIVEQGLINNVQQIGIHLATDFYLPFELISIILLVSLIGAITMARQ.

A run of 5 helical transmembrane segments spans residues 10–30 (ILMLFGGFVLLLGGLGVVLLT), 33–53 (IYSAFSLGLVLVCISLFYFLL), 60–80 (VAQLLIYVGAINVLIIFAVMF), 95–115 (IGDGFTSIVCITIVFSLMTTI), and 152–172 (FYLPFELISIILLVSLIGAIT).

It belongs to the complex I subunit 6 family. NDH is composed of at least 16 different subunits, 5 of which are encoded in the nucleus.

It localises to the plastid. The protein localises to the chloroplast thylakoid membrane. The enzyme catalyses a plastoquinone + NADH + (n+1) H(+)(in) = a plastoquinol + NAD(+) + n H(+)(out). The catalysed reaction is a plastoquinone + NADPH + (n+1) H(+)(in) = a plastoquinol + NADP(+) + n H(+)(out). Functionally, NDH shuttles electrons from NAD(P)H:plastoquinone, via FMN and iron-sulfur (Fe-S) centers, to quinones in the photosynthetic chain and possibly in a chloroplast respiratory chain. The immediate electron acceptor for the enzyme in this species is believed to be plastoquinone. Couples the redox reaction to proton translocation, and thus conserves the redox energy in a proton gradient. This Lolium perenne (Perennial ryegrass) protein is NAD(P)H-quinone oxidoreductase subunit 6, chloroplastic (ndhG).